The following is a 60-amino-acid chain: Large ribosomal subunit protein uL30 (60 aa).

Belongs to the universal ribosomal protein uL30 family. As to quaternary structure, part of the 50S ribosomal subunit.

This is Large ribosomal subunit protein uL30 from Lysinibacillus sphaericus (strain C3-41).